The following is a 352-amino-acid chain: tRNA (guanine-N(1)-)-methyltransferase (352 aa).

S-adenosyl-L-methionine-binding positions include G109 and 129–134 (IGDYVL).

Belongs to the RNA methyltransferase TrmD family. In terms of assembly, homodimer.

It is found in the cytoplasm. It catalyses the reaction guanosine(37) in tRNA + S-adenosyl-L-methionine = N(1)-methylguanosine(37) in tRNA + S-adenosyl-L-homocysteine + H(+). Functionally, specifically methylates guanosine-37 in various tRNAs. This is tRNA (guanine-N(1)-)-methyltransferase from Chlamydia trachomatis serovar L2 (strain ATCC VR-902B / DSM 19102 / 434/Bu).